Reading from the N-terminus, the 161-residue chain is Nucleotide-binding protein Pnec_0318 (161 aa).

This sequence belongs to the YajQ family.

Nucleotide-binding protein. This Polynucleobacter necessarius subsp. necessarius (strain STIR1) protein is Nucleotide-binding protein Pnec_0318.